The chain runs to 329 residues: Replication factor C small subunit (329 aa).

51 to 58 (GPPGTGKT) is an ATP binding site.

Belongs to the activator 1 small subunits family. RfcS subfamily. In terms of assembly, heteromultimer composed of small subunits (RfcS) and large subunits (RfcL).

Its function is as follows. Part of the RFC clamp loader complex which loads the PCNA sliding clamp onto DNA. In Staphylothermus marinus (strain ATCC 43588 / DSM 3639 / JCM 9404 / F1), this protein is Replication factor C small subunit.